The chain runs to 310 residues: Nuclear hormone receptor family member nhr-89 (310 aa).

A DNA-binding region (nuclear receptor) is located at residues 5 to 79 (EGPCRVCHSV…SGMRRDCVRK (75 aa)). 2 consecutive NR C4-type zinc fingers follow at residues 8–29 (CRVC…CMSC) and 43–67 (CPAN…YNKC). Positions 101 to 310 (KLSESYEELL…TLHQKYQIPF (210 aa)) constitute an NR LBD domain.

This sequence belongs to the nuclear hormone receptor family.

Its subcellular location is the nucleus. Its function is as follows. Orphan nuclear receptor. The chain is Nuclear hormone receptor family member nhr-89 (nhr-89) from Caenorhabditis elegans.